A 572-amino-acid chain; its full sequence is Dihydroxy-acid dehydratase (572 aa).

Cys54 contacts [2Fe-2S] cluster. Residue Asp86 coordinates Mg(2+). A [2Fe-2S] cluster-binding site is contributed by Cys127. Mg(2+) contacts are provided by Asp128 and Lys129. Lys129 carries the N6-carboxylysine modification. Cys199 lines the [2Fe-2S] cluster pocket. Residue Glu449 coordinates Mg(2+). Residue Ser475 is the Proton acceptor of the active site.

This sequence belongs to the IlvD/Edd family. In terms of assembly, homodimer. [2Fe-2S] cluster serves as cofactor. It depends on Mg(2+) as a cofactor.

The enzyme catalyses (2R)-2,3-dihydroxy-3-methylbutanoate = 3-methyl-2-oxobutanoate + H2O. It catalyses the reaction (2R,3R)-2,3-dihydroxy-3-methylpentanoate = (S)-3-methyl-2-oxopentanoate + H2O. The protein operates within amino-acid biosynthesis; L-isoleucine biosynthesis; L-isoleucine from 2-oxobutanoate: step 3/4. Its pathway is amino-acid biosynthesis; L-valine biosynthesis; L-valine from pyruvate: step 3/4. In terms of biological role, functions in the biosynthesis of branched-chain amino acids. Catalyzes the dehydration of (2R,3R)-2,3-dihydroxy-3-methylpentanoate (2,3-dihydroxy-3-methylvalerate) into 2-oxo-3-methylpentanoate (2-oxo-3-methylvalerate) and of (2R)-2,3-dihydroxy-3-methylbutanoate (2,3-dihydroxyisovalerate) into 2-oxo-3-methylbutanoate (2-oxoisovalerate), the penultimate precursor to L-isoleucine and L-valine, respectively. The protein is Dihydroxy-acid dehydratase of Pelagibacter ubique (strain HTCC1062).